The primary structure comprises 70 residues: Large ribosomal subunit protein bL31 (70 aa).

The Zn(2+) site is built by C16, C18, C36, and C39.

Belongs to the bacterial ribosomal protein bL31 family. Type A subfamily. As to quaternary structure, part of the 50S ribosomal subunit. Requires Zn(2+) as cofactor.

Functionally, binds the 23S rRNA. This chain is Large ribosomal subunit protein bL31, found in Tolumonas auensis (strain DSM 9187 / NBRC 110442 / TA 4).